The sequence spans 124 residues: Ribonuclease pancreatic (124 aa).

Substrate is bound by residues Lys-7 and Arg-10. The active-site Proton acceptor is the His-12. Cystine bridges form between Cys-26-Cys-84, Cys-40-Cys-95, Cys-58-Cys-110, and Cys-65-Cys-72. An N-linked (GlcNAc...) asparagine glycan is attached at Asn-34. Substrate contacts are provided by residues 41-45 (KPVNT), Lys-66, and Arg-85. His-119 acts as the Proton donor in catalysis.

Belongs to the pancreatic ribonuclease family. As to quaternary structure, monomer. Interacts with and forms tight 1:1 complexes with RNH1. Dimerization of two such complexes may occur. Interaction with RNH1 inhibits this protein. Pancreas.

Its subcellular location is the secreted. It carries out the reaction an [RNA] containing cytidine + H2O = an [RNA]-3'-cytidine-3'-phosphate + a 5'-hydroxy-ribonucleotide-3'-[RNA].. The enzyme catalyses an [RNA] containing uridine + H2O = an [RNA]-3'-uridine-3'-phosphate + a 5'-hydroxy-ribonucleotide-3'-[RNA].. Functionally, endonuclease that catalyzes the cleavage of RNA on the 3' side of pyrimidine nucleotides. Acts on single-stranded and double-stranded RNA. The polypeptide is Ribonuclease pancreatic (RNASE1) (Eudorcas thomsonii (Thomson's gazelle)).